The following is a 313-amino-acid chain: Aspartate carbamoyltransferase catalytic subunit (313 aa).

Residues Arg59 and Thr60 each coordinate carbamoyl phosphate. An L-aspartate-binding site is contributed by Lys87. The carbamoyl phosphate site is built by Arg109, His137, and Gln140. 2 residues coordinate L-aspartate: Arg170 and Arg224. Residues Gly265 and Pro266 each coordinate carbamoyl phosphate.

Belongs to the aspartate/ornithine carbamoyltransferase superfamily. ATCase family. In terms of assembly, heterododecamer (2C3:3R2) of six catalytic PyrB chains organized as two trimers (C3), and six regulatory PyrI chains organized as three dimers (R2).

It carries out the reaction carbamoyl phosphate + L-aspartate = N-carbamoyl-L-aspartate + phosphate + H(+). It participates in pyrimidine metabolism; UMP biosynthesis via de novo pathway; (S)-dihydroorotate from bicarbonate: step 2/3. Catalyzes the condensation of carbamoyl phosphate and aspartate to form carbamoyl aspartate and inorganic phosphate, the committed step in the de novo pyrimidine nucleotide biosynthesis pathway. This chain is Aspartate carbamoyltransferase catalytic subunit, found in Sinorhizobium medicae (strain WSM419) (Ensifer medicae).